The chain runs to 129 residues: Glycine cleavage system H protein (129 aa).

The 83-residue stretch at 24 to 106 folds into the Lipoyl-binding domain; that stretch reads IAVIGITAYA…YGDGWLIKVR (83 aa). At lysine 65 the chain carries N6-lipoyllysine.

Belongs to the GcvH family. The glycine cleavage system is composed of four proteins: P, T, L and H. (R)-lipoate serves as cofactor.

In terms of biological role, the glycine cleavage system catalyzes the degradation of glycine. The H protein shuttles the methylamine group of glycine from the P protein to the T protein. In Synechococcus sp. (strain JA-2-3B'a(2-13)) (Cyanobacteria bacterium Yellowstone B-Prime), this protein is Glycine cleavage system H protein.